The primary structure comprises 115 residues: NAD(P)H-quinone oxidoreductase subunit M (115 aa).

The protein belongs to the complex I NdhM subunit family. NDH-1 can be composed of about 15 different subunits; different subcomplexes with different compositions have been identified which probably have different functions.

It localises to the cellular thylakoid membrane. It catalyses the reaction a plastoquinone + NADH + (n+1) H(+)(in) = a plastoquinol + NAD(+) + n H(+)(out). It carries out the reaction a plastoquinone + NADPH + (n+1) H(+)(in) = a plastoquinol + NADP(+) + n H(+)(out). Functionally, NDH-1 shuttles electrons from an unknown electron donor, via FMN and iron-sulfur (Fe-S) centers, to quinones in the respiratory and/or the photosynthetic chain. The immediate electron acceptor for the enzyme in this species is believed to be plastoquinone. Couples the redox reaction to proton translocation, and thus conserves the redox energy in a proton gradient. Cyanobacterial NDH-1 also plays a role in inorganic carbon-concentration. This Prochlorococcus marinus (strain MIT 9303) protein is NAD(P)H-quinone oxidoreductase subunit M.